The chain runs to 209 residues: ATP-dependent Clp protease proteolytic subunit (209 aa).

Serine 101 functions as the Nucleophile in the catalytic mechanism. Histidine 126 is an active-site residue.

Belongs to the peptidase S14 family. Component of the chloroplastic Clp protease core complex.

The protein resides in the plastid. Its subcellular location is the chloroplast stroma. The catalysed reaction is Hydrolysis of proteins to small peptides in the presence of ATP and magnesium. alpha-casein is the usual test substrate. In the absence of ATP, only oligopeptides shorter than five residues are hydrolyzed (such as succinyl-Leu-Tyr-|-NHMec, and Leu-Tyr-Leu-|-Tyr-Trp, in which cleavage of the -Tyr-|-Leu- and -Tyr-|-Trp bonds also occurs).. Functionally, cleaves peptides in various proteins in a process that requires ATP hydrolysis. Has a chymotrypsin-like activity. Plays a major role in the degradation of misfolded proteins. The polypeptide is ATP-dependent Clp protease proteolytic subunit (Huperzia lucidula (Shining clubmoss)).